A 374-amino-acid chain; its full sequence is Type IV pilus assembly protein PilC (374 aa).

The next 3 membrane-spanning stretches (helical) occupy residues 138-158, 187-207, and 347-367; these read AMTY…ILLI, EFLQ…GFTF, and IMAV…LPIF.

This sequence belongs to the GSP F family. In terms of assembly, homotetramer. Interacts with PilB.

Its subcellular location is the cell inner membrane. Essential inner membrane component of the type IV pilus (T4P) that plays a role in surface and host cell adhesion, colonization, biofilm maturation, virulence, and twitching, a form of surface-associated motility facilitated by cycles of extension, adhesion, and retraction of T4P fibers. Controls both pilus assembly and disassembly and plays an important role in PilB localization to the complex and ATPase activity. This is Type IV pilus assembly protein PilC (pilC) from Pseudomonas aeruginosa (strain ATCC 15692 / DSM 22644 / CIP 104116 / JCM 14847 / LMG 12228 / 1C / PRS 101 / PAO1).